We begin with the raw amino-acid sequence, 152 residues long: Protein SprT-like (152 aa).

Positions 7 to 147 (QRLVEEVSLQ…CGKCKGKLKP (141 aa)) constitute a SprT-like domain. Residue His-67 coordinates Zn(2+). Residue Glu-68 is part of the active site. His-71 contributes to the Zn(2+) binding site.

The protein belongs to the SprT family. Zn(2+) is required as a cofactor.

It localises to the cytoplasm. This is Protein SprT-like from Bacillus cereus (strain ATCC 14579 / DSM 31 / CCUG 7414 / JCM 2152 / NBRC 15305 / NCIMB 9373 / NCTC 2599 / NRRL B-3711).